Consider the following 476-residue polypeptide: Cardiolipin synthase (476 aa).

2 helical membrane-spanning segments follow: residues 2–22 and 31–51; these read HLFINMIFLINIVFIISIIFI and WAWILILTFLPILGFIIYILF. 2 PLD phosphodiesterase domains span residues 207-234 and 389-416; these read INYRNHRKILIIDSKVAFLGGFNIGDEY and EKGFLHAKTIVADSSICSVGTANMDIRS. Catalysis depends on residues histidine 212, lysine 214, aspartate 219, histidine 394, lysine 396, and aspartate 401.

The protein belongs to the phospholipase D family. Cardiolipin synthase subfamily.

The protein localises to the cell membrane. It carries out the reaction 2 a 1,2-diacyl-sn-glycero-3-phospho-(1'-sn-glycerol) = a cardiolipin + glycerol. In terms of biological role, catalyzes the reversible phosphatidyl group transfer from one phosphatidylglycerol molecule to another to form cardiolipin (CL) (diphosphatidylglycerol) and glycerol. In Clostridium perfringens (strain ATCC 13124 / DSM 756 / JCM 1290 / NCIMB 6125 / NCTC 8237 / Type A), this protein is Cardiolipin synthase (cls).